A 220-amino-acid chain; its full sequence is Guanylate kinase (220 aa).

The 180-residue stretch at 16 to 195 (GLMFVLSSPS…AFESVRSILR (180 aa)) folds into the Guanylate kinase-like domain. Position 23–30 (23–30 (SPSGAGKT)) interacts with ATP.

The protein belongs to the guanylate kinase family.

The protein localises to the cytoplasm. The enzyme catalyses GMP + ATP = GDP + ADP. Essential for recycling GMP and indirectly, cGMP. In Rhodopseudomonas palustris (strain ATCC BAA-98 / CGA009), this protein is Guanylate kinase.